The chain runs to 340 residues: GATA transcription factor 20 (340 aa).

The disordered stretch occupies residues 1-88 (MSHHDGSKPY…MEEDEDAQHH (88 aa)). Positions 25–47 (ADDAAAHVAPTVDHLAAVAAEAE) are enriched in low complexity. Basic and acidic residues predominate over residues 48-60 (AMARFEEEHRALG). Acidic residues predominate over residues 61 to 84 (AEEEYEEEEDELEEEEEEMEEDED). The Tify domain maps to 121 to 156 (QPMASNQLTLSFQGEVYVFDSVSPDKVQAVLLLLGG). One can recognise a CCT domain in the interval 182–224 (RVASLMRFREKRKERNFDKKIRYSVRKEVALRMQRNRGQFTSS). Positions 215–253 (QRNRGQFTSSKPKGDEATSELTASDGSPNWGSVEGRPPS) are disordered. The segment covering 233–244 (SELTASDGSPNW) has biased composition (polar residues). The GATA-type zinc-finger motif lies at 257–284 (CHHCGINAKATPMMRRGPDGPRTLCNAC). The span at 313-325 (DGNGSAAAPTTEQ) shows a compositional bias: polar residues. Residues 313–340 (DGNGSAAAPTTEQEIPAPATVNGHESST) are disordered.

Belongs to the type IV zinc-finger family. Class C subfamily.

It localises to the nucleus. Transcriptional activator that specifically binds 5'-GATA-3' or 5'-GAT-3' motifs within gene promoters. The chain is GATA transcription factor 20 from Oryza sativa subsp. japonica (Rice).